Consider the following 82-residue polypeptide: Small ribosomal subunit protein bS16c (82 aa).

This sequence belongs to the bacterial ribosomal protein bS16 family.

It localises to the plastid. Its subcellular location is the chloroplast. In Porphyra purpurea (Red seaweed), this protein is Small ribosomal subunit protein bS16c.